A 294-amino-acid chain; its full sequence is 33 kDa chaperonin (294 aa).

Intrachain disulfides connect cysteine 239–cysteine 241 and cysteine 272–cysteine 275.

It belongs to the HSP33 family. In terms of processing, under oxidizing conditions two disulfide bonds are formed involving the reactive cysteines. Under reducing conditions zinc is bound to the reactive cysteines and the protein is inactive.

The protein localises to the cytoplasm. Its function is as follows. Redox regulated molecular chaperone. Protects both thermally unfolding and oxidatively damaged proteins from irreversible aggregation. Plays an important role in the bacterial defense system toward oxidative stress. This Listeria welshimeri serovar 6b (strain ATCC 35897 / DSM 20650 / CCUG 15529 / CIP 8149 / NCTC 11857 / SLCC 5334 / V8) protein is 33 kDa chaperonin.